A 309-amino-acid chain; its full sequence is MELQFLGTGAGQPAKQRNVSSLALKLLDEINEVWMFDCGEGTQRQILETTIKPRKIRKIFITHLHGDHIFGLPGFLSSRSFQASEEQTDLDIYGPIGIKTYVLTSLKVSGARVPYQIHFHEFDDKSLGKIMETDKFEVYAERLAHTIFCMGYRVVQKDLEGTLDAEALKAAGVPFGPLFGKIKNGQDVELEDGRLICAKDYISAPKKGKIITIIGDTRKTSASVKLAKDADVLVHESTYGKGDERIARNHGHSTNMQAAQIAHEAGAKRLLLNHVSARFLGRDCRQMEKDAATIFENVKMVQDLEEVII.

The Zn(2+) site is built by His63, His65, Asp67, His68, His145, Asp216, and His274. The active-site Proton acceptor is the Asp67.

This sequence belongs to the RNase Z family. Homodimer. Zn(2+) serves as cofactor.

It catalyses the reaction Endonucleolytic cleavage of RNA, removing extra 3' nucleotides from tRNA precursor, generating 3' termini of tRNAs. A 3'-hydroxy group is left at the tRNA terminus and a 5'-phosphoryl group is left at the trailer molecule.. Zinc phosphodiesterase, which displays some tRNA 3'-processing endonuclease activity. Probably involved in tRNA maturation, by removing a 3'-trailer from precursor tRNA. This is Ribonuclease Z from Streptococcus pyogenes serotype M1.